Reading from the N-terminus, the 752-residue chain is Polyribonucleotide nucleotidyltransferase (752 aa).

Asp529 and Asp535 together coordinate Mg(2+). Positions 595-654 constitute a KH domain; sequence PRVTTIKVPVDKIGEVIGPKGKVINAITEETGAQISIEDDGTVFVGATDGPSAQAAIDKI. One can recognise an S1 motif domain in the interval 666–735; that stretch reads GERFLGTVVK…KRGKISLILV (70 aa).

This sequence belongs to the polyribonucleotide nucleotidyltransferase family. Mg(2+) is required as a cofactor.

Its subcellular location is the cytoplasm. The catalysed reaction is RNA(n+1) + phosphate = RNA(n) + a ribonucleoside 5'-diphosphate. Involved in mRNA degradation. Catalyzes the phosphorolysis of single-stranded polyribonucleotides processively in the 3'- to 5'-direction. This chain is Polyribonucleotide nucleotidyltransferase, found in Mycobacterium tuberculosis (strain ATCC 25177 / H37Ra).